The following is a 260-amino-acid chain: Acetylglutamate kinase (260 aa).

Substrate is bound by residues 46-47, arginine 68, and asparagine 160; that span reads GG.

It belongs to the acetylglutamate kinase family. ArgB subfamily.

The protein localises to the cytoplasm. It carries out the reaction N-acetyl-L-glutamate + ATP = N-acetyl-L-glutamyl 5-phosphate + ADP. It functions in the pathway amino-acid biosynthesis; L-arginine biosynthesis; N(2)-acetyl-L-ornithine from L-glutamate: step 2/4. Functionally, catalyzes the ATP-dependent phosphorylation of N-acetyl-L-glutamate. The chain is Acetylglutamate kinase from Shewanella sp. (strain MR-7).